A 159-amino-acid polypeptide reads, in one-letter code: Transcriptional repressor NrdR (159 aa).

The segment at Met-1–Asp-21 is disordered. Residues Cys-3–Cys-34 fold into a zinc finger. Positions Leu-49–Glu-139 constitute an ATP-cone domain.

It belongs to the NrdR family. Zn(2+) serves as cofactor.

Its function is as follows. Negatively regulates transcription of bacterial ribonucleotide reductase nrd genes and operons by binding to NrdR-boxes. The polypeptide is Transcriptional repressor NrdR (Streptococcus thermophilus (strain CNRZ 1066)).